Reading from the N-terminus, the 257-residue chain is AN1-type zinc finger protein 2B (257 aa).

2 AN1-type zinc fingers span residues 4-52 (PDLG…QKDI) and 94-142 (KIFT…HPTS). Cys10, Cys15, Cys25, Cys28, Cys33, His36, His42, Cys44, Cys100, Cys105, Cys115, Cys118, Cys123, His126, His132, and Cys134 together coordinate Zn(2+). The interval 141–151 (TSRAGLAAISR) is VCP/p97-interacting motif (VIM). The interval 153 to 187 (QGLASTSTVPSPSRTLPSSSSPSRATPQLPPRTTS) is disordered. Low complexity predominate over residues 156 to 179 (ASTSTVPSPSRTLPSSSSPSRATP). Phosphoserine occurs at positions 163, 173, and 187. UIM domains follow at residues 197-216 (SEDE…AKPQ) and 221-240 (QEEE…AEYQ). Cysteine methyl ester is present on Cys254. The S-geranylgeranyl cysteine moiety is linked to residue Cys254. The CAAX motif motif lies at 254 to 257 (CSLC). Residues 255–257 (SLC) constitute a propeptide, removed in mature form.

Binds 'Lys-48'-linked polyubiquitin chains of ubiquitinated proteins. Associates with the proteasome complex; upon exposure to arsenite. Interacts (via VIM motif) with VCP; the interaction is direct. Interacts with BAG6. Interacts with IGF1R (nascent precursor form). Interacts with DERL1, FAF2, NPLOC4 and UFD1; probably through VCP. In terms of processing, phosphorylated by MAPK14. Phosphorylation has no effect on association with the proteasome complex.

Its subcellular location is the endoplasmic reticulum membrane. Its function is as follows. Plays a role in protein homeostasis by regulating both the translocation and the ubiquitin-mediated proteasomal degradation of nascent proteins at the endoplasmic reticulum. It is involved in the regulation of signal-mediated translocation of proteins into the endoplasmic reticulum. It also plays a role in the ubiquitin-mediated proteasomal degradation of proteins for which signal-mediated translocation to the endoplasmic reticulum has failed. May therefore function in the endoplasmic reticulum stress-induced pre-emptive quality control, a mechanism that selectively attenuates the translocation of newly synthesized proteins into the endoplasmic reticulum and reroutes them to the cytosol for proteasomal degradation. By controlling the steady-state expression of the IGF1R receptor, indirectly regulates the insulin-like growth factor receptor signaling pathway. This Rattus norvegicus (Rat) protein is AN1-type zinc finger protein 2B.